The primary structure comprises 293 residues: 33 kDa chaperonin (293 aa).

2 disulfide bridges follow: Cys238/Cys240 and Cys271/Cys274.

The protein belongs to the HSP33 family. In terms of processing, under oxidizing conditions two disulfide bonds are formed involving the reactive cysteines. Under reducing conditions zinc is bound to the reactive cysteines and the protein is inactive.

The protein localises to the cytoplasm. Functionally, redox regulated molecular chaperone. Protects both thermally unfolding and oxidatively damaged proteins from irreversible aggregation. Plays an important role in the bacterial defense system toward oxidative stress. This is 33 kDa chaperonin from Staphylococcus aureus (strain Mu3 / ATCC 700698).